A 168-amino-acid chain; its full sequence is Lipoprotein signal peptidase (168 aa).

The next 3 membrane-spanning stretches (helical) occupy residues 15–35, 69–89, and 95–115; these read AIAA…LGLL, WGRW…AVWV, and PLLA…NLID. Residues Asp-124 and Asp-141 contribute to the active site. A helical transmembrane segment spans residues 133–153; that stretch reads FPWVFNIADSGISVGVALLLL.

The protein belongs to the peptidase A8 family.

Its subcellular location is the cell inner membrane. It carries out the reaction Release of signal peptides from bacterial membrane prolipoproteins. Hydrolyzes -Xaa-Yaa-Zaa-|-(S,diacylglyceryl)Cys-, in which Xaa is hydrophobic (preferably Leu), and Yaa (Ala or Ser) and Zaa (Gly or Ala) have small, neutral side chains.. It functions in the pathway protein modification; lipoprotein biosynthesis (signal peptide cleavage). Its function is as follows. This protein specifically catalyzes the removal of signal peptides from prolipoproteins. The protein is Lipoprotein signal peptidase of Caulobacter vibrioides (strain ATCC 19089 / CIP 103742 / CB 15) (Caulobacter crescentus).